The following is a 143-amino-acid chain: Hemoglobin subunit alpha-1 (143 aa).

The residue at position 2 (Ser2) is an N-acetylserine. In terms of domain architecture, Globin spans 2 to 143 (SLSSKDKATV…RALALAEKYR (142 aa)). An O2-binding site is contributed by His60. A heme b-binding site is contributed by His89.

This sequence belongs to the globin family. Hb 1 is a heterotetramer of two alpha-1 and two beta-1 chains. Hb 3 is a heterotetramer of two alpha-1 and two beta-2 chains. Red blood cells.

Its function is as follows. Involved in oxygen transport from gills to the various peripheral tissues. This chain is Hemoglobin subunit alpha-1 (hba1), found in Gadus morhua (Atlantic cod).